The sequence spans 314 residues: Homoserine O-succinyltransferase (314 aa).

The Acyl-thioester intermediate role is filled by Cys142. Lys163 and Ser192 together coordinate substrate. His235 (proton acceptor) is an active-site residue. The active site involves Glu237. Substrate is bound at residue Arg249.

It belongs to the MetA family.

Its subcellular location is the cytoplasm. The catalysed reaction is L-homoserine + succinyl-CoA = O-succinyl-L-homoserine + CoA. Its pathway is amino-acid biosynthesis; L-methionine biosynthesis via de novo pathway; O-succinyl-L-homoserine from L-homoserine: step 1/1. Transfers a succinyl group from succinyl-CoA to L-homoserine, forming succinyl-L-homoserine. The chain is Homoserine O-succinyltransferase from Shewanella frigidimarina (strain NCIMB 400).